Here is a 334-residue protein sequence, read N- to C-terminus: Protein-methionine-sulfoxide reductase catalytic subunit MsrP (334 aa).

The tat-type signal signal peptide spans 1 to 44 (MKKNQFLKESDVTAESVFFMKRRQVLKALGISAAALSLPHAAHA). Residues Asn-88, 91 to 92 (YE), Cys-146, Thr-181, Asn-233, Arg-238, and 249 to 251 (GIK) contribute to the Mo-molybdopterin site.

The protein belongs to the MsrP family. Heterodimer of a catalytic subunit (MsrP) and a heme-binding subunit (MsrQ). Mo-molybdopterin serves as cofactor. Post-translationally, predicted to be exported by the Tat system. The position of the signal peptide cleavage has not been experimentally proven.

It localises to the periplasm. The catalysed reaction is L-methionyl-[protein] + a quinone + H2O = L-methionyl-(S)-S-oxide-[protein] + a quinol. It carries out the reaction L-methionyl-[protein] + a quinone + H2O = L-methionyl-(R)-S-oxide-[protein] + a quinol. Its function is as follows. Part of the MsrPQ system that repairs oxidized periplasmic proteins containing methionine sulfoxide residues (Met-O), using respiratory chain electrons. Thus protects these proteins from oxidative-stress damage caused by reactive species of oxygen and chlorine generated by the host defense mechanisms. MsrPQ is essential for the maintenance of envelope integrity under bleach stress, rescuing a wide series of structurally unrelated periplasmic proteins from methionine oxidation, including the primary periplasmic chaperone SurA and the lipoprotein Pal. The catalytic subunit MsrP is non-stereospecific, being able to reduce both (R-) and (S-) diastereoisomers of methionine sulfoxide. The sequence is that of Protein-methionine-sulfoxide reductase catalytic subunit MsrP from Escherichia coli O17:K52:H18 (strain UMN026 / ExPEC).